The primary structure comprises 228 residues: Cytidylate kinase (228 aa).

17–25 contacts ATP; that stretch reads GPTASGKGT.

It belongs to the cytidylate kinase family. Type 1 subfamily.

The protein resides in the cytoplasm. The enzyme catalyses CMP + ATP = CDP + ADP. It catalyses the reaction dCMP + ATP = dCDP + ADP. The protein is Cytidylate kinase of Burkholderia multivorans (strain ATCC 17616 / 249).